Reading from the N-terminus, the 286-residue chain is Transcription factor bHLH11 (286 aa).

Residues 1-34 (MDQPMKPKTCSESDFADDSSASSSSSSGQNLRGA) are disordered. The segment covering 18 to 27 (DSSASSSSSS) has biased composition (low complexity). The region spanning 44–94 (AVCSQKAEREKLRRDKLKEQFLELGNALDPNRPKSDKASVLTDTIQMLKDV) is the bHLH domain. Disordered stretches follow at residues 182–202 (EQQASVQQHSSSSADASMKQD) and 244–286 (QQDV…MLKP). 2 stretches are compositionally biased toward low complexity: residues 183–198 (QQASVQQHSSSSADAS) and 255–269 (SLTTTASSSNSYSLS). Over residues 270 to 279 (QAVQDSSPGT) the composition is skewed to polar residues.

Homodimer. Expressed consitutively in roots, leaves, stems, and flowers.

Its subcellular location is the nucleus. This Arabidopsis thaliana (Mouse-ear cress) protein is Transcription factor bHLH11 (BHLH11).